Consider the following 163-residue polypeptide: MAKRNIRIMGDSILNKTSKVIEEVTPKIDTLIDDMLDTMYDAGGVGLAAPQVGVLKRLVVIDVSLEGNEPIILINPEIISTDGEQTGDEGCLSLPGKAGIVTRPNYVKVKAYDRHMKPFEVEGEGLLARAFCHEIDHLDGILYVEKVNGEVHEVTSYDEEEEE.

Residues cysteine 91 and histidine 133 each coordinate Fe cation. Residue glutamate 134 is part of the active site. Fe cation is bound at residue histidine 137.

It belongs to the polypeptide deformylase family. Requires Fe(2+) as cofactor.

The catalysed reaction is N-terminal N-formyl-L-methionyl-[peptide] + H2O = N-terminal L-methionyl-[peptide] + formate. Removes the formyl group from the N-terminal Met of newly synthesized proteins. Requires at least a dipeptide for an efficient rate of reaction. N-terminal L-methionine is a prerequisite for activity but the enzyme has broad specificity at other positions. The chain is Peptide deformylase from Lachnoclostridium phytofermentans (strain ATCC 700394 / DSM 18823 / ISDg) (Clostridium phytofermentans).